We begin with the raw amino-acid sequence, 253 residues long: UPF0758 protein Bxeno_A3578 (253 aa).

The MPN domain occupies 131 to 253 (LINSPEAVEN…VYSFARAGWP (123 aa)). Zn(2+)-binding residues include His-202, His-204, and Asp-215. The JAMM motif motif lies at 202–215 (HNHPSGAVQPSASD).

The protein belongs to the UPF0758 family.

The chain is UPF0758 protein Bxeno_A3578 from Paraburkholderia xenovorans (strain LB400).